The following is a 525-amino-acid chain: NGFI-A-binding protein 2 (525 aa).

The segment at 1–22 is disordered; sequence MHRAPSPTAEQPPGGGDSARRT. Residue S6 is modified to Phosphoserine. Residues 35–113 are NCD1; sequence ALPRTLGELQ…REWATNPGLF (79 aa). The segment at 135–237 is disordered; that stretch reads GTRKGSMSNG…GGTGGGPDRL (103 aa). 4 positions are modified to phosphoserine: S157, S159, S162, and S171. A compositionally biased stretch (gly residues) spans 212–234; the sequence is AGGGVPEGTGAGGLAAGGTGGGP. An NCD2 region spans residues 267 to 356; that stretch reads LLKLNKKLAR…SRQVARESTY (90 aa). Residues 353-384 are necessary for nuclear localization; sequence ESTYLSSLKGSRLHPEELGGPPLKKLKQEVGE. K379 participates in a covalent cross-link: Glycyl lysine isopeptide (Lys-Gly) (interchain with G-Cter in SUMO1). The disordered stretch occupies residues 380–416; it reads QEVGEQSHPEIQQPPPGPESYVPPYRPSLEEDSASLS. Phosphoserine is present on S479. The interval 502–525 is disordered; that stretch reads PGPHPALVEGRRSSVKVEAEASRQ. Positions 510-525 are enriched in basic and acidic residues; that stretch reads EGRRSSVKVEAEASRQ. Residue K517 forms a Glycyl lysine isopeptide (Lys-Gly) (interchain with G-Cter in SUMO1); alternate linkage. K517 participates in a covalent cross-link: Glycyl lysine isopeptide (Lys-Gly) (interchain with G-Cter in SUMO2); alternate.

The protein belongs to the NAB family. As to quaternary structure, homomultimers may associate with EGR1 bound to DNA. Post-translationally, sumoylation by EGR2 represses EGR2 transcriptional activity in hindbrain. In terms of tissue distribution, widely expressed at low levels. Highly expressed in melanoma cell lines.

Its subcellular location is the nucleus. Acts as a transcriptional repressor for zinc finger transcription factors EGR1 and EGR2. Isoform 2 lacks repression ability. In Homo sapiens (Human), this protein is NGFI-A-binding protein 2 (NAB2).